Consider the following 87-residue polypeptide: Cuticle protein 1 (87 aa).

Position 1 is a pyrrolidone carboxylic acid (Gln1). A run of 3 repeats spans residues 5 to 20 (YPAG…YPNC), 43 to 58 (YPAG…YPFC), and 71 to 86 (YPAG…YPYC). Disulfide bonds link Cys14–Cys20, Cys52–Cys58, and Cys80–Cys86.

The sequence is that of Cuticle protein 1 from Blaberus craniifer (Death's head cockroach).